Reading from the N-terminus, the 257-residue chain is Short-chain dehydrogenase reductase 3a (257 aa).

Ile12–Val36 is an NAD(+) binding site. A substrate-binding site is contributed by Ser144. Tyr157 functions as the Proton acceptor in the catalytic mechanism.

It belongs to the short-chain dehydrogenases/reductases (SDR) family. As to expression, highly expressed in the radicle tip, lateral root primordia and tips, and the area surrounding the cotyledon hydathode of young seedlings.

In terms of biological role, confers resistance to the incompatible pathogenic bacteria P.syringae pv. tomato DC3000 in a PR1-dependent manner. Seems not involved in abscisic acid (ABA) biosynthesis. The chain is Short-chain dehydrogenase reductase 3a (SDR3a) from Arabidopsis thaliana (Mouse-ear cress).